Here is a 228-residue protein sequence, read N- to C-terminus: Lipoprotein-releasing system ATP-binding protein LolD (228 aa).

The ABC transporter domain occupies 6–228; it reads LRCKELSKSY…KNGILHKEQG (223 aa). Position 42–49 (42–49) interacts with ATP; the sequence is GASGSGKS.

This sequence belongs to the ABC transporter superfamily. Lipoprotein translocase (TC 3.A.1.125) family. The complex is composed of two ATP-binding proteins (LolD) and two transmembrane proteins (LolC and LolE).

The protein localises to the cell inner membrane. In terms of biological role, part of the ABC transporter complex LolCDE involved in the translocation of mature outer membrane-directed lipoproteins, from the inner membrane to the periplasmic chaperone, LolA. Responsible for the formation of the LolA-lipoprotein complex in an ATP-dependent manner. The polypeptide is Lipoprotein-releasing system ATP-binding protein LolD (Idiomarina loihiensis (strain ATCC BAA-735 / DSM 15497 / L2-TR)).